The following is a 354-amino-acid chain: Carbamoyl phosphate synthase arginine-specific small chain (354 aa).

Positions 1 to 163 are CPSase; it reads MKAYLHVASG…RTIETYGEGG (163 aa). L-glutamine-binding residues include Ser46, Gly213, and Gly215. The Glutamine amidotransferase type-1 domain maps to 165–352; sequence HLVLVDFGYK…LQTVFKGENV (188 aa). Catalysis depends on Cys240, which acts as the Nucleophile. The L-glutamine site is built by Leu241, Gln244, Asn282, and Tyr285. Catalysis depends on residues His325 and Glu327.

The protein belongs to the CarA family. Composed of two chains; the small (or glutamine) chain promotes the hydrolysis of glutamine to ammonia, which is used by the large (or ammonia) chain to synthesize carbamoyl phosphate. Tetramer of heterodimers (alpha,beta)4.

The catalysed reaction is hydrogencarbonate + L-glutamine + 2 ATP + H2O = carbamoyl phosphate + L-glutamate + 2 ADP + phosphate + 2 H(+). It carries out the reaction L-glutamine + H2O = L-glutamate + NH4(+). It participates in amino-acid biosynthesis; L-arginine biosynthesis; carbamoyl phosphate from bicarbonate: step 1/1. Functionally, small subunit of the glutamine-dependent carbamoyl phosphate synthetase (CPSase). CPSase catalyzes the formation of carbamoyl phosphate from the ammonia moiety of glutamine, carbonate, and phosphate donated by ATP, constituting the first step of the biosynthetic pathway leading to arginine and/or urea. The small subunit (glutamine amidotransferase) binds and cleaves glutamine to supply the large subunit with the substrate ammonia. This is Carbamoyl phosphate synthase arginine-specific small chain from Geobacillus stearothermophilus (Bacillus stearothermophilus).